The chain runs to 141 residues: Hemoglobin subunit alpha-1 (141 aa).

The Globin domain occupies 1–141; sequence VLTEDDKNHI…VAKTLVAHYR (141 aa). His-58 is a binding site for O2. A heme b-binding site is contributed by His-87.

The protein belongs to the globin family. As to quaternary structure, heterotetramer of two alpha chains and two beta chains. Red blood cells.

Its function is as follows. Involved in oxygen transport from the lung to the various peripheral tissues. The polypeptide is Hemoglobin subunit alpha-1 (Iguana iguana (Common iguana)).